A 1643-amino-acid polypeptide reads, in one-letter code: Outer membrane protein B (1643 aa).

A propeptide spanning residues 1329-1352 is cleaved from the precursor; that stretch reads GTLRYLSNAETSDVAGSATGAVSS. The Autotransporter domain maps to 1355-1643; that stretch reads EAEVSYGVWA…QGTLKVRVNF (289 aa).

Belongs to the rickettsiae OmpA/OmpB family.

Its subcellular location is the periplasm. The protein localises to the secreted. It is found in the cell surface. It localises to the cell outer membrane. Functionally, the 120 kDa surface-exposed protein is a major structural protein which may play a role as a rickettsial virulence factor and/or immunogen during infection. In terms of biological role, the 32 kDa beta peptide may serve as a membrane anchor. It has been shown to adhere to biotinylated Vero cell proteins. This Rickettsia prowazekii (strain Madrid E) protein is Outer membrane protein B (ompB).